A 967-amino-acid chain; its full sequence is MSFAVGQRWISDTESELGLGTVVQIEGRMVTLLFPATGENRMFAMAEAPLTRVIYNPGDTIDSAEGWGMTVDKVEELNGLVFYLGKRTDTGEDTMLRETLLEHNIRFNKPQDRLYAGQIDRIERFGVRYKAQLLRHKQATSPLLGLQGPRVGLIPHQLWIAHEVGRRHAPRVLLADEVGLGKTIEAGLIIHQQLMTGRAERVLVIVPDTLRHQWLVEMLRRFNLRFSVFDEDRCVEAFADHDNPFYTEQLVICSLELLRKKRRLEQALDADWDLMVVDEAHHLEWSEDEPSRAYQVVEALAEVVPGVLLLTATPDQLGHQSHFARLRLLDPDRFYDYQAFLDEEKGYQAVAEAADALASGIKLSDEAINGLTELLSEKDIAPAIRQIQAENLDEELRQAARDELLQELLDRHGTGRVLFRNSRASVKGFPKREFHSHGFELPEQYVTAMRVNAMMGGARTQEARVAQALSPERIYQEFDDNNASWWKFDPRVDWLIDFLKSHRSKKVLVIASRAETALALEEALRTREGIQATVFHEGMSIIERDKAGAYFAQEEGGAQALICSEIGSEGRNFQFASQLVLFDLPLNPDLLEQRIGRLDRIGQRHDVQIHLPFLKHTAQEQLMHWYHEGLCAFELTCPGGHVLFGEFKERLLSVLTGESDELDELMADTKARYKALKAAMEQGRDKLLELNSHGGAKAEAITASLSDADEDTDLIASVIRLWDVIGIDQDDKGENSIVLRTTEHMMYPTYPGLNEDGVTVTFDRNTALSRDDIALITLEHPLVQTGLDLITGSDTGTTCVALLKNKALPAGTIFLELIYLAETTAPKASQLYRYLPPTPVRVLLDKNGNNLSDKVDYDSFDKQLSGVNRHIASKLVNASQTMLHPLFAKGEEFAGEALETLTQDARARMESQLGAELSRLEALKAVNPSIREEELEHLRNMMQELSGYLGNTQLKLDAIRLVLVSHN.

Residues 163–332 (EVGRRHAPRV…FARLRLLDPD (170 aa)) form the Helicase ATP-binding domain. 176-183 (DEVGLGKT) contributes to the ATP binding site. The short motif at 278–281 (DEAH) is the DEAH box element. One can recognise a Helicase C-terminal domain in the interval 491-639 (RVDWLIDFLK…LCAFELTCPG (149 aa)).

The protein belongs to the SNF2/RAD54 helicase family. RapA subfamily. In terms of assembly, interacts with the RNAP. Has a higher affinity for the core RNAP than for the holoenzyme. Its ATPase activity is stimulated by binding to RNAP.

In terms of biological role, transcription regulator that activates transcription by stimulating RNA polymerase (RNAP) recycling in case of stress conditions such as supercoiled DNA or high salt concentrations. Probably acts by releasing the RNAP, when it is trapped or immobilized on tightly supercoiled DNA. Does not activate transcription on linear DNA. Probably not involved in DNA repair. This Shewanella amazonensis (strain ATCC BAA-1098 / SB2B) protein is RNA polymerase-associated protein RapA.